Reading from the N-terminus, the 216-residue chain is Probable transaldolase (216 aa).

Lysine 83 serves as the catalytic Schiff-base intermediate with substrate.

It belongs to the transaldolase family. Type 3B subfamily.

It localises to the cytoplasm. It catalyses the reaction D-sedoheptulose 7-phosphate + D-glyceraldehyde 3-phosphate = D-erythrose 4-phosphate + beta-D-fructose 6-phosphate. The protein operates within carbohydrate degradation; pentose phosphate pathway; D-glyceraldehyde 3-phosphate and beta-D-fructose 6-phosphate from D-ribose 5-phosphate and D-xylulose 5-phosphate (non-oxidative stage): step 2/3. Its function is as follows. Transaldolase is important for the balance of metabolites in the pentose-phosphate pathway. The sequence is that of Probable transaldolase from Caldanaerobacter subterraneus subsp. tengcongensis (strain DSM 15242 / JCM 11007 / NBRC 100824 / MB4) (Thermoanaerobacter tengcongensis).